The chain runs to 473 residues: MKNKFKTQEELVNHLKTVGFVFANSEIYNGLANAWDYGPLGVLLKNNLKNLWWKEFVTKQKDVVGLDSAIILNPLVWKASGHLDNFSDPLIDCKNCKARYRADKLIESFDENIHIAENSSNEEFAKVLNDYEISCPTCKQFNWTEIRHFNLMFKTYQGVIEDAKNVVYLRPETAQGIFVNFKNVQRSMRLHLPFGIAQIGKSFRNEITPGNFIFRTREFEQMEIEFFLKEESAYDIFDKYLNQIENWLVSACGLSLNNLRKHEHPKEELSHYSKKTIDFEYNFLHGFSELYGIAYRTNYDLSVHMNLSKKDLTYFDEQTKEKYVPHVIEPSVGVERLLYAILTEATFIEKLENDDERILMDLKYDLAPYKIAVMPLVNKLKDKAEEIYGKILDLNISATFDNSGSIGKRYRRQDAIGTIYCLTIDFDSLDDQQDPSFTIRERNSMAQKRIKLSELPLYLNQKAHEDFQRQCQK.

2 residues coordinate substrate: R101 and E172. ATP contacts are provided by residues 204–206 (RNE), 214–219 (FRTREF), 289–290 (EL), and 333–336 (GVER). 219-223 (FEQME) lines the substrate pocket. 329–333 (EPSVG) contacts substrate.

Belongs to the class-II aminoacyl-tRNA synthetase family. In terms of assembly, homodimer.

The protein resides in the cytoplasm. It carries out the reaction tRNA(Gly) + glycine + ATP = glycyl-tRNA(Gly) + AMP + diphosphate. Its function is as follows. Catalyzes the attachment of glycine to tRNA(Gly). The sequence is that of Glycine--tRNA ligase from Ureaplasma urealyticum serovar 10 (strain ATCC 33699 / Western).